The sequence spans 72 residues: Translation initiation factor IF-1 (72 aa).

Positions 1 to 72 (MAKDDVIEVD…DKGRITFRYK (72 aa)) constitute an S1-like domain.

It belongs to the IF-1 family. In terms of assembly, component of the 30S ribosomal translation pre-initiation complex which assembles on the 30S ribosome in the order IF-2 and IF-3, IF-1 and N-formylmethionyl-tRNA(fMet); mRNA recruitment can occur at any time during PIC assembly.

Its subcellular location is the cytoplasm. Functionally, one of the essential components for the initiation of protein synthesis. Stabilizes the binding of IF-2 and IF-3 on the 30S subunit to which N-formylmethionyl-tRNA(fMet) subsequently binds. Helps modulate mRNA selection, yielding the 30S pre-initiation complex (PIC). Upon addition of the 50S ribosomal subunit IF-1, IF-2 and IF-3 are released leaving the mature 70S translation initiation complex. In Wolinella succinogenes (strain ATCC 29543 / DSM 1740 / CCUG 13145 / JCM 31913 / LMG 7466 / NCTC 11488 / FDC 602W) (Vibrio succinogenes), this protein is Translation initiation factor IF-1.